Here is a 273-residue protein sequence, read N- to C-terminus: Type III pantothenate kinase (273 aa).

7–14 contacts ATP; sequence DVGNTAIK. Residues F119 and 124–127 contribute to the substrate site; that span reads GIDR. Residue D126 is the Proton acceptor of the active site. D146 serves as a coordination point for K(+). Residue T149 participates in ATP binding. Substrate is bound at residue T206.

Belongs to the type III pantothenate kinase family. As to quaternary structure, homodimer. The cofactor is NH4(+). Requires K(+) as cofactor.

It is found in the cytoplasm. It carries out the reaction (R)-pantothenate + ATP = (R)-4'-phosphopantothenate + ADP + H(+). The protein operates within cofactor biosynthesis; coenzyme A biosynthesis; CoA from (R)-pantothenate: step 1/5. Catalyzes the phosphorylation of pantothenate (Pan), the first step in CoA biosynthesis. This is Type III pantothenate kinase from Rhodopirellula baltica (strain DSM 10527 / NCIMB 13988 / SH1).